A 459-amino-acid polypeptide reads, in one-letter code: Bifunctional protein GlmU (459 aa).

The segment at 1 to 230 (MVKRYAVILA…FDETIGINDR (230 aa)) is pyrophosphorylase. Residues 9 to 12 (LAAG), lysine 23, glutamine 73, and 78 to 79 (GT) each bind UDP-N-acetyl-alpha-D-glucosamine. Aspartate 103 contributes to the Mg(2+) binding site. UDP-N-acetyl-alpha-D-glucosamine is bound by residues glycine 140, glutamate 155, asparagine 170, and asparagine 228. Residue asparagine 228 participates in Mg(2+) binding. Positions 231–251 (IALAEAERIMRDRICRQHMKN) are linker. The tract at residues 252–459 (GVTIIDPACT…VDRLRGKKKS (208 aa)) is N-acetyltransferase. UDP-N-acetyl-alpha-D-glucosamine-binding residues include arginine 333 and lysine 351. Histidine 363 functions as the Proton acceptor in the catalytic mechanism. Residues tyrosine 366 and asparagine 377 each coordinate UDP-N-acetyl-alpha-D-glucosamine. Acetyl-CoA contacts are provided by residues 386–387 (NY), alanine 423, and arginine 440.

It in the N-terminal section; belongs to the N-acetylglucosamine-1-phosphate uridyltransferase family. This sequence in the C-terminal section; belongs to the transferase hexapeptide repeat family. As to quaternary structure, homotrimer. The cofactor is Mg(2+).

Its subcellular location is the cytoplasm. The catalysed reaction is alpha-D-glucosamine 1-phosphate + acetyl-CoA = N-acetyl-alpha-D-glucosamine 1-phosphate + CoA + H(+). The enzyme catalyses N-acetyl-alpha-D-glucosamine 1-phosphate + UTP + H(+) = UDP-N-acetyl-alpha-D-glucosamine + diphosphate. It participates in nucleotide-sugar biosynthesis; UDP-N-acetyl-alpha-D-glucosamine biosynthesis; N-acetyl-alpha-D-glucosamine 1-phosphate from alpha-D-glucosamine 6-phosphate (route II): step 2/2. It functions in the pathway nucleotide-sugar biosynthesis; UDP-N-acetyl-alpha-D-glucosamine biosynthesis; UDP-N-acetyl-alpha-D-glucosamine from N-acetyl-alpha-D-glucosamine 1-phosphate: step 1/1. Its pathway is bacterial outer membrane biogenesis; LPS lipid A biosynthesis. Its function is as follows. Catalyzes the last two sequential reactions in the de novo biosynthetic pathway for UDP-N-acetylglucosamine (UDP-GlcNAc). The C-terminal domain catalyzes the transfer of acetyl group from acetyl coenzyme A to glucosamine-1-phosphate (GlcN-1-P) to produce N-acetylglucosamine-1-phosphate (GlcNAc-1-P), which is converted into UDP-GlcNAc by the transfer of uridine 5-monophosphate (from uridine 5-triphosphate), a reaction catalyzed by the N-terminal domain. The protein is Bifunctional protein GlmU of Geobacillus thermodenitrificans (strain NG80-2).